The chain runs to 122 residues: UPF0102 protein CLH_1204 (122 aa).

This sequence belongs to the UPF0102 family.

This chain is UPF0102 protein CLH_1204, found in Clostridium botulinum (strain Alaska E43 / Type E3).